A 356-amino-acid polypeptide reads, in one-letter code: Tyrosine recombinase XerS (356 aa).

Residues 16 to 121 (LMPWFVLEYY…ALSSLYKYLT (106 aa)) form the Core-binding (CB) domain. Positions 169–354 (KFLDYVENEY…VNDEQKNALD (186 aa)) constitute a Tyr recombinase domain. Residues Arg-210, Lys-234, His-306, Arg-309, and His-332 contribute to the active site. The O-(3'-phospho-DNA)-tyrosine intermediate role is filled by Tyr-341.

It belongs to the 'phage' integrase family. XerS subfamily.

It localises to the cytoplasm. With respect to regulation, ftsK is required for recombination. Site-specific tyrosine recombinase, which acts by catalyzing the cutting and rejoining of the recombining DNA molecules. Essential to convert dimers of the bacterial chromosome into monomers to permit their segregation at cell division. This Streptococcus thermophilus (strain CNRZ 1066) protein is Tyrosine recombinase XerS.